The following is a 378-amino-acid chain: Probable dihydroorotase-like protein (378 aa).

Belongs to the metallo-dependent hydrolases superfamily. DHOase family. PyrC' subfamily.

Functionally, non-functional DHOase. This is Probable dihydroorotase-like protein (pyrC') from Helicobacter pylori (strain ATCC 700392 / 26695) (Campylobacter pylori).